The following is a 252-amino-acid chain: MRILVSNDDGYTAPGLEALVQALQGLGELTVVAPETNHSGASNSLTLNRPLTVRTAANGFICVNGTPSDCVHVALTGLMDTRPDLVVSGINNGANMGDDTLYSGTVAAAAEGYLFGIPAIAFSLAEKGWAHIEAAARVARQVVERQVAQQLAAPVLLNVNIPSRPFEAMAGLQVTRLGKRHPSEPVVRTTTPYGDTVYWIGPVGLAADAAPGTDFHAVAQGAVSVTPLRLDLTQHSQLDEVRRWAEPLCASL.

Asp-8, Asp-9, Ser-39, and Asn-91 together coordinate a divalent metal cation.

The protein belongs to the SurE nucleotidase family. A divalent metal cation is required as a cofactor.

Its subcellular location is the cytoplasm. The enzyme catalyses a ribonucleoside 5'-phosphate + H2O = a ribonucleoside + phosphate. Nucleotidase that shows phosphatase activity on nucleoside 5'-monophosphates. This chain is 5'-nucleotidase SurE, found in Bordetella petrii (strain ATCC BAA-461 / DSM 12804 / CCUG 43448).